A 316-amino-acid chain; its full sequence is Coproporphyrin III ferrochelatase (316 aa).

Fe-coproporphyrin III is bound by residues Tyr-13, Arg-30, 46–47 (RY), Ser-54, and Tyr-125. Positions 183 and 264 each coordinate Fe(2+).

The protein belongs to the ferrochelatase family.

Its subcellular location is the cytoplasm. It carries out the reaction Fe-coproporphyrin III + 2 H(+) = coproporphyrin III + Fe(2+). Its pathway is porphyrin-containing compound metabolism; protoheme biosynthesis. Functionally, involved in coproporphyrin-dependent heme b biosynthesis. Catalyzes the insertion of ferrous iron into coproporphyrin III to form Fe-coproporphyrin III. The sequence is that of Coproporphyrin III ferrochelatase from Geobacillus kaustophilus (strain HTA426).